Here is a 415-residue protein sequence, read N- to C-terminus: MTVPAPSQLDLRQEVHDAARRARVAARRLASLPTTVKDRALHAAADELLAHRDQILAANAEDLNAAREADTPAAMLDRLSLNPQRVDGIAAGLRQVAGLRDPVGEVLRGYTLPNGLQLRQQRVPLGVVGMIYEGRPNVTVDAFGLTLKSGNAALLRGSSSAAKSNEALVAVLRTALVGLELPADAVQLLSAADRATVTHLIQARGLVDVVIPRGGAGLIEAVVRDAQVPTIETGVGNCHVYVHQAADLDVAERILLNSKTRRPSVCNAAETLLVDAAIAETALPRLLAALQHAGVTVHLDPDEADLRREYLSLDIAVAVVDGVDAAIAHINEYGTGHTEAIVTTNLDAAQRFTEQIDAAAVMVNASTAFTDGEQFGFGAEIGISTQKLHARGPMGLPELTSTKWIAWGAGHTRPA.

It belongs to the gamma-glutamyl phosphate reductase family.

The protein localises to the cytoplasm. The catalysed reaction is L-glutamate 5-semialdehyde + phosphate + NADP(+) = L-glutamyl 5-phosphate + NADPH + H(+). It participates in amino-acid biosynthesis; L-proline biosynthesis; L-glutamate 5-semialdehyde from L-glutamate: step 2/2. Functionally, catalyzes the NADPH-dependent reduction of L-glutamate 5-phosphate into L-glutamate 5-semialdehyde and phosphate. The product spontaneously undergoes cyclization to form 1-pyrroline-5-carboxylate. In Mycobacterium bovis (strain BCG / Pasteur 1173P2), this protein is Gamma-glutamyl phosphate reductase.